The sequence spans 192 residues: Superoxide dismutase [Fe] (192 aa).

Residues H27, H74, D157, and H161 each coordinate Fe cation.

This sequence belongs to the iron/manganese superoxide dismutase family. In terms of assembly, homodimer. Requires Fe cation as cofactor.

It catalyses the reaction 2 superoxide + 2 H(+) = H2O2 + O2. Its function is as follows. Destroys superoxide anion radicals which are normally produced within the cells and which are toxic to biological systems. The sequence is that of Superoxide dismutase [Fe] (sodB) from Legionella pneumophila subsp. pneumophila (strain Philadelphia 1 / ATCC 33152 / DSM 7513).